The sequence spans 462 residues: L-seryl-tRNA(Sec) selenium transferase (462 aa).

Lysine 292 carries the post-translational modification N6-(pyridoxal phosphate)lysine.

Belongs to the SelA family. Requires pyridoxal 5'-phosphate as cofactor.

The protein resides in the cytoplasm. The enzyme catalyses L-seryl-tRNA(Sec) + selenophosphate + H(+) = L-selenocysteinyl-tRNA(Sec) + phosphate. The protein operates within aminoacyl-tRNA biosynthesis; selenocysteinyl-tRNA(Sec) biosynthesis; selenocysteinyl-tRNA(Sec) from L-seryl-tRNA(Sec) (bacterial route): step 1/1. Converts seryl-tRNA(Sec) to selenocysteinyl-tRNA(Sec) required for selenoprotein biosynthesis. The protein is L-seryl-tRNA(Sec) selenium transferase of Clostridium perfringens (strain ATCC 13124 / DSM 756 / JCM 1290 / NCIMB 6125 / NCTC 8237 / Type A).